A 150-amino-acid chain; its full sequence is Small ribosomal subunit protein eS19 (150 aa).

The protein belongs to the eukaryotic ribosomal protein eS19 family. Part of the 30S ribosomal subunit.

Its function is as follows. May be involved in maturation of the 30S ribosomal subunit. The polypeptide is Small ribosomal subunit protein eS19 (Thermoplasma volcanium (strain ATCC 51530 / DSM 4299 / JCM 9571 / NBRC 15438 / GSS1)).